Here is a 431-residue protein sequence, read N- to C-terminus: UPF0597 protein TDE_2144 (431 aa).

Belongs to the UPF0597 family.

The protein is UPF0597 protein TDE_2144 of Treponema denticola (strain ATCC 35405 / DSM 14222 / CIP 103919 / JCM 8153 / KCTC 15104).